The following is a 505-amino-acid chain: Lysine--tRNA ligase (505 aa).

Residues E415 and E422 each contribute to the Mg(2+) site.

Belongs to the class-II aminoacyl-tRNA synthetase family. In terms of assembly, homodimer. It depends on Mg(2+) as a cofactor.

Its subcellular location is the cytoplasm. It catalyses the reaction tRNA(Lys) + L-lysine + ATP = L-lysyl-tRNA(Lys) + AMP + diphosphate. The protein is Lysine--tRNA ligase of Pectobacterium atrosepticum (strain SCRI 1043 / ATCC BAA-672) (Erwinia carotovora subsp. atroseptica).